A 370-amino-acid chain; its full sequence is Phosphate-binding protein PstS 3 (370 aa).

An N-terminal signal peptide occupies residues 1–22 (MKLNRFGAAVGVLAAGALVLSA). The N-palmitoyl cysteine moiety is linked to residue cysteine 23. A lipid anchor (S-diacylglycerol cysteine) is attached at cysteine 23. Phosphate is bound by residues 56–58 (STA), serine 86, aspartate 104, and 191–193 (SGT).

Belongs to the PstS family. As to quaternary structure, the complex is composed of two ATP-binding proteins (PstB), two transmembrane proteins (PstC and PstA) and a solute-binding protein (PstS).

The protein resides in the cell membrane. In terms of biological role, part of the ABC transporter complex PstSACB involved in phosphate import. The polypeptide is Phosphate-binding protein PstS 3 (pstS3) (Mycobacterium bovis (strain ATCC BAA-935 / AF2122/97)).